The chain runs to 241 residues: Folate receptor alpha (241 aa).

The signal sequence occupies residues 1–19 (MAWQMTQLLLLALVAAAWG). Intrachain disulfides connect Cys-36–Cys-64, Cys-56–Cys-104, Cys-65–Cys-108, Cys-88–Cys-174, Cys-95–Cys-145, Cys-134–Cys-208, Cys-138–Cys-188, and Cys-151–Cys-168. N-linked (GlcNAc...) asparagine glycosylation is present at Asn-68. Residues Asp-102, Tyr-106, 123-127 (WRKER), 156-161 (HKGWNW), and Ser-195 each bind folate. A glycan (N-linked (GlcNAc...) asparagine) is linked at Asn-160. Ser-234 is lipidated: GPI-anchor amidated serine. Residues 235 to 241 (GSTPQGI) constitute a propeptide, removed in mature form.

It belongs to the folate receptor family. In terms of processing, the secreted form is derived from the membrane-bound form either by cleavage of the GPI anchor, or/and by proteolysis catalyzed by a metalloprotease. Detected in milk (at protein level).

The protein localises to the cell membrane. It is found in the apical cell membrane. Its subcellular location is the basolateral cell membrane. It localises to the secreted. The protein resides in the cytoplasmic vesicle. The protein localises to the clathrin-coated vesicle. It is found in the endosome. Its function is as follows. Binds to folate and reduced folic acid derivatives and mediates delivery of 5-methyltetrahydrofolate and folate analogs into the interior of cells. Has high affinity for folate and folic acid analogs at neutral pH. Exposure to slightly acidic pH after receptor endocytosis triggers a conformation change that strongly reduces its affinity for folates and mediates their release. Required for normal embryonic development and normal cell proliferation. The sequence is that of Folate receptor alpha (FOLR1) from Bos taurus (Bovine).